Reading from the N-terminus, the 633-residue chain is Probable alkaline/neutral invertase A, chloroplastic (633 aa).

The N-terminal 71 residues, 1–71, are a transit peptide targeting the chloroplast; the sequence is MNAITFLGNS…TNAVPFCTDR (71 aa). Ser-623 carries the phosphoserine modification.

The protein belongs to the glycosyl hydrolase 100 family. Expressed in flowers.

Its subcellular location is the plastid. It localises to the chloroplast. The enzyme catalyses Hydrolysis of terminal non-reducing beta-D-fructofuranoside residues in beta-D-fructofuranosides.. In terms of biological role, chloroplastic invertase that cleaves sucrose into glucose and fructose and may participate in the carbon flux between the cytosol and plastids in leaves. This is Probable alkaline/neutral invertase A, chloroplastic from Arabidopsis thaliana (Mouse-ear cress).